A 118-amino-acid chain; its full sequence is Small ribosomal subunit protein uS13 (118 aa).

The disordered stretch occupies residues 94–118 (SLPVRGQRTKTNARTRKGPRRPIKR).

Belongs to the universal ribosomal protein uS13 family. In terms of assembly, part of the 30S ribosomal subunit. Forms a loose heterodimer with protein S19. Forms two bridges to the 50S subunit in the 70S ribosome.

Functionally, located at the top of the head of the 30S subunit, it contacts several helices of the 16S rRNA. In the 70S ribosome it contacts the 23S rRNA (bridge B1a) and protein L5 of the 50S subunit (bridge B1b), connecting the 2 subunits; these bridges are implicated in subunit movement. Contacts the tRNAs in the A and P-sites. This chain is Small ribosomal subunit protein uS13, found in Dichelobacter nodosus (strain VCS1703A).